Here is a 603-residue protein sequence, read N- to C-terminus: MGPPPPPPPPPLLPSGEILPSRKWKTEDAPRRNNHPAPAPPKPSRPTVDASALQHAAARLRKTGYNEPVRGDVENLSDGRLDRPHQQLPDGDRTYRANLQQLAQPKTRAEIPSPPTYSNQPRPLGDFHRDPNALSQFQQSREALLSSTSPTSNYSPINKFSSSTLTQYANKSPSPPSFGNSNSEATYVSPYSSKHSYPTNFRSYHKDDDYFNNTATTATTTTSSNSLNENNNSNKYGNKETVLQWSEPYDPSKIRRSQSPIRNAREMIHEYSTTNYVTEVQQPPPPPPDLYQRMTQARTFLQNSLAKQLRDEGLTESQKAANRNQTGALSASSSIPFDASQIVKNSYNGDEVDHLVHQMRTKLNQPADTSPSIVQYPRRQAPDSSRANYSATTSTSFSSSTTRKIMNINICVGCGKEITGDQPGCNAMNQIFHVDCFKCGQCSKTLAGASFYNIDDKPTCEGCYQNSLEKCTACNRAISDKLLRACGGVYHVNCFVCFSCKKSLDGIPFTLDKDNNVHCVPCFHDKFAPRCALCSKPIVPQDGEKESVRVVAMDKSFHVDCYKCEDCGMQLSSKLEGQGCYPIDNHLLCKTCNGNRLRVVSST.

Residues 1 to 13 (MGPPPPPPPPPLL) are compositionally biased toward pro residues. Disordered stretches follow at residues 1–131 (MGPP…HRDP), 166–193 (TQYANKSPSPPSFGNSNSEATYVSPYSS), 218–237 (ATTTTSSNSLNENNNSNKYG), 310–333 (RDEGLTESQKAANRNQTGALSASS), and 363–395 (LNQPADTSPSIVQYPRRQAPDSSRANYSATTST). Residues 69 to 95 (VRGDVENLSDGRLDRPHQQLPDGDRTY) are compositionally biased toward basic and acidic residues. Over residues 184-193 (EATYVSPYSS) the composition is skewed to polar residues. The span at 218 to 234 (ATTTTSSNSLNENNNSN) shows a compositional bias: low complexity. 3 stretches are compositionally biased toward polar residues: residues 315 to 333 (TESQKAANRNQTGALSASS), 363 to 373 (LNQPADTSPSI), and 382 to 391 (PDSSRANYSA). LIM zinc-binding domains follow at residues 409-470 (NICV…SLEK), 471-529 (CTAC…KFAP), and 530-601 (RCAL…RVVS).

Belongs to the zyxin/ajuba family. Interacts with dyc-1. Interacts with glh-1 and glh-3. As to expression, expressed in neurons and body wall muscle. Expressed in pharyngeal, enteric and uterine muscles and in spermatheca.

The protein localises to the nucleus. Its subcellular location is the cytoplasm. It localises to the myofibril. The protein resides in the sarcomere. It is found in the m line. The protein localises to the cell projection. Its subcellular location is the axon. It localises to the cell junction. The protein resides in the focal adhesion. It is found in the cytoskeleton. Functions both as a mechanical stabilizer (via LIM domains) of focal adhesions, and as a sensor component for muscle cell damage (via N-terminus). Regulates, stabilizes and maintains posterior lateral mechanosensory (PLM) synaptic branch extension and new synapse formation and growth during larval development. The protein is Zyxin of Caenorhabditis elegans.